Reading from the N-terminus, the 161-residue chain is ATP synthase subunit b (161 aa).

A helical transmembrane segment spans residues 10–29; the sequence is SVIQLMSFFLLLYILKKFLY.

The protein belongs to the ATPase B chain family. F-type ATPases have 2 components, F(1) - the catalytic core - and F(0) - the membrane proton channel. F(1) has five subunits: alpha(3), beta(3), gamma(1), delta(1), epsilon(1). F(0) has three main subunits: a(1), b(2) and c(10-14). The alpha and beta chains form an alternating ring which encloses part of the gamma chain. F(1) is attached to F(0) by a central stalk formed by the gamma and epsilon chains, while a peripheral stalk is formed by the delta and b chains.

The protein localises to the cell inner membrane. Functionally, f(1)F(0) ATP synthase produces ATP from ADP in the presence of a proton or sodium gradient. F-type ATPases consist of two structural domains, F(1) containing the extramembraneous catalytic core and F(0) containing the membrane proton channel, linked together by a central stalk and a peripheral stalk. During catalysis, ATP synthesis in the catalytic domain of F(1) is coupled via a rotary mechanism of the central stalk subunits to proton translocation. In terms of biological role, component of the F(0) channel, it forms part of the peripheral stalk, linking F(1) to F(0). This chain is ATP synthase subunit b, found in Thermosipho melanesiensis (strain DSM 12029 / CIP 104789 / BI429).